The primary structure comprises 457 residues: Senescence-associated protein OSA15, chloroplastic (457 aa).

Residues 1-57 (MATRIPGTVAASGVYYNDQYRMPCKLKGIHCMALNCIPQKAKVRKCMNGYQSTFRFC) constitute a chloroplast transit peptide.

Belongs to the ATA15/OSA15 family. Expressed in leaves (at protein level).

The protein resides in the plastid. Its subcellular location is the chloroplast. Its function is as follows. May be involved in the regulation of leaf senescence. This is Senescence-associated protein OSA15, chloroplastic from Oryza sativa subsp. japonica (Rice).